The primary structure comprises 255 residues: Probable sulfate transport system permease protein cysT (255 aa).

The next 7 helical transmembrane spans lie at 2–22, 48–68, 77–97, 118–138, 167–187, 195–215, and 225–245; these read LGNH…SLIL, MALI…WVIT, FIDA…GLTL, IIYT…PFVI, FLRV…TLSF, GSVV…SVLI, and FGAS…IFLI. In terms of domain architecture, ABC transmembrane type-1 spans 42–246; that stretch reads YGFTIKMALI…IALLIIFLIN (205 aa).

This sequence belongs to the binding-protein-dependent transport system permease family. CysTW subfamily.

Its subcellular location is the plastid membrane. Functionally, part of the ABC transporter complex cysAWTP (TC 3.A.1.6.1) involved in sulfate/thiosulfate import. Probably responsible for the translocation of the substrate across the membrane. The protein is Probable sulfate transport system permease protein cysT (cysT) of Prototheca wickerhamii.